The sequence spans 41 residues: Photosystem I reaction center subunit IX (41 aa).

A helical membrane pass occupies residues 7 to 27 (YLSTAPVVAAAWFTFTAGLLI).

The protein belongs to the PsaJ family.

It is found in the plastid. The protein localises to the chloroplast thylakoid membrane. Functionally, may help in the organization of the PsaE and PsaF subunits. The protein is Photosystem I reaction center subunit IX of Oltmannsiellopsis viridis (Marine flagellate).